A 368-amino-acid polypeptide reads, in one-letter code: MSLFGTTSGFGTSGTSMFGSTTTDNHNPMKDIEVTSSPDDSIGCLSFSPPTLPGNFLIAGSWANDVRCWEVQDSGQTIPKAQQMHTGPVLDVCWSDDGSKVFTASCDKTAKMWDLNSNQAIQIAQHDAPVKTIHWIKAPNYSCVMTGSWDKTLKFWDTRSSNPMMVLQLPERCYCADVIYPMAVVATAERGLIVYQLENQPSEFRRIESPLKHQHRCVAIFKDKQNKPTGFALGSIEGRVAIHYINPPNPAKDNFTFKCHRSNGTNTSAPQDIYAVNGIAFHPVHGTLATVGSDGRFSFWDKDARTKLKTSEQLDQPISACCFNHNGNIFAYASSYDWSKGHEFYNPQKKNYIFLRNAAEELKPRNKK.

Residues T15–V34 form a disordered region. WD repeat units follow at residues S37–P79, M84–D114, Q125–D157, Q168–R206, H215–F255, Q271–D301, and T310–N346. Position 229 is a phosphothreonine (T229).

This sequence belongs to the WD repeat rae1 family. In terms of assembly, interacts with NUMA1 (via N-terminal end of the coiled-coil domain); this interaction promotes spindle formation in mitosis. Interacts with NUP98. Interacts with MYCBP2. Interacts with USP11.

It is found in the cytoplasm. The protein resides in the nucleus. It localises to the cytoskeleton. Its subcellular location is the spindle pole. Plays a role in mitotic bipolar spindle formation. Binds mRNA. May function in nucleocytoplasmic transport and in directly or indirectly attaching cytoplasmic mRNPs to the cytoskeleton. The polypeptide is mRNA export factor (RAE1) (Sus scrofa (Pig)).